Reading from the N-terminus, the 202-residue chain is MAEESTDFSQFEEERNNDQYKVSAKKTVDEYKNLDAEDESLAKWKESLGLSSDVLPLEFPGDKRKVVVQKIQLLVNTEPNPITFDLTNEKTIKELASKRYKIKENSIYKLKIVFKVQHEIITGLRYVQYIKKAGIAVDKIDDHLGSYAPNTKTKPFYEVELPESEAPSGFLARGNYSAVSKFIDDDKTNHLTLNWGVEIVKK.

Position 2 is an N-acetylalanine (alanine 2). Position 27 is a phosphothreonine (threonine 27). Serine 40 is subject to Phosphoserine.

The protein belongs to the Rho GDI family.

Its subcellular location is the cytoplasm. In terms of biological role, regulates the GDP/GTP exchange reaction of the Rho proteins by inhibiting the dissociation of GDP from them, and the subsequent binding of GTP to them. The sequence is that of Rho GDP-dissociation inhibitor (RDI1) from Saccharomyces cerevisiae (strain ATCC 204508 / S288c) (Baker's yeast).